The chain runs to 95 residues: Protein TusB (95 aa).

The protein belongs to the DsrH/TusB family. As to quaternary structure, heterohexamer, formed by a dimer of trimers. The hexameric TusBCD complex contains 2 copies each of TusB, TusC and TusD. The TusBCD complex interacts with TusE.

It is found in the cytoplasm. Part of a sulfur-relay system required for 2-thiolation of 5-methylaminomethyl-2-thiouridine (mnm(5)s(2)U) at tRNA wobble positions. The polypeptide is Protein TusB (Salmonella dublin (strain CT_02021853)).